The sequence spans 545 residues: ATP synthase subunit alpha (545 aa).

Residue 173–180 coordinates ATP; the sequence is GDRQTGKS.

Belongs to the ATPase alpha/beta chains family. As to quaternary structure, F-type ATPases have 2 components, CF(1) - the catalytic core - and CF(0) - the membrane proton channel. CF(1) has five subunits: alpha(3), beta(3), gamma(1), delta(1), epsilon(1). CF(0) has three main subunits: a(1), b(2) and c(9-12). The alpha and beta chains form an alternating ring which encloses part of the gamma chain. CF(1) is attached to CF(0) by a central stalk formed by the gamma and epsilon chains, while a peripheral stalk is formed by the delta and b chains.

It localises to the cell membrane. The catalysed reaction is ATP + H2O + 4 H(+)(in) = ADP + phosphate + 5 H(+)(out). In terms of biological role, produces ATP from ADP in the presence of a proton gradient across the membrane. The alpha chain is a regulatory subunit. The protein is ATP synthase subunit alpha of Pseudarthrobacter chlorophenolicus (strain ATCC 700700 / DSM 12829 / CIP 107037 / JCM 12360 / KCTC 9906 / NCIMB 13794 / A6) (Arthrobacter chlorophenolicus).